The sequence spans 510 residues: Putative glycerol-3-phosphate transporter 3 (510 aa).

The next 12 membrane-spanning stretches (helical) occupy residues 31 to 51 (LSFKQYQAMVFVLTFIAYIAF), 91 to 111 (ALLGQIDLAFLSVYAVGMFVA), 123 to 143 (FLTIGMVGTGVCTALFGVAFW), 158 to 178 (LAGWFQSIGWPCVVAVLGNWF), 185 to 205 (VIMGVWSAHTSLGNIIGTLIA), 217 to 237 (FVGPALLITFLGIVVYLFLPV), 279 to 299 (VGFLAAWKIPGVAPFAFCLFF), 331 to 351 (GNLSTLFDVGGVVGGILAGYF), 355 to 375 (LDGRAITAGGFIYLTIPALFL), 378 to 398 (IYGHVSMTINIILMFVAGLFV), 436 to 456 (TGSVGAAIGPVLTGYIAAISW), and 459 to 479 (VFYMLMTAALISGLLLTTLII).

This sequence belongs to the major facilitator superfamily. Organophosphate:Pi antiporter (OPA) (TC 2.A.1.4) family.

The protein resides in the membrane. The sequence is that of Putative glycerol-3-phosphate transporter 3 from Arabidopsis thaliana (Mouse-ear cress).